A 429-amino-acid chain; its full sequence is Glutamyl-tRNA reductase (429 aa).

Substrate is bound by residues 56 to 59, serine 119, 124 to 126, and glutamine 130; these read TCNR and EPQ. The Nucleophile role is filled by cysteine 57. Residue 199–204 participates in NADP(+) binding; sequence GAGEMI.

It belongs to the glutamyl-tRNA reductase family. As to quaternary structure, homodimer.

It catalyses the reaction (S)-4-amino-5-oxopentanoate + tRNA(Glu) + NADP(+) = L-glutamyl-tRNA(Glu) + NADPH + H(+). Its pathway is porphyrin-containing compound metabolism; protoporphyrin-IX biosynthesis; 5-aminolevulinate from L-glutamyl-tRNA(Glu): step 1/2. Functionally, catalyzes the NADPH-dependent reduction of glutamyl-tRNA(Glu) to glutamate 1-semialdehyde (GSA). The protein is Glutamyl-tRNA reductase of Janthinobacterium sp. (strain Marseille) (Minibacterium massiliensis).